We begin with the raw amino-acid sequence, 488 residues long: Cobyric acid synthase (488 aa).

The region spanning 247–440 (LLRVIVPVLP…VHGVFDEPTA (194 aa)) is the GATase cobBQ-type domain. The active-site Nucleophile is the Cys-328. His-432 is an active-site residue.

Belongs to the CobB/CobQ family. CobQ subfamily.

It functions in the pathway cofactor biosynthesis; adenosylcobalamin biosynthesis. Catalyzes amidations at positions B, D, E, and G on adenosylcobyrinic A,C-diamide. NH(2) groups are provided by glutamine, and one molecule of ATP is hydrogenolyzed for each amidation. The sequence is that of Cobyric acid synthase from Cupriavidus pinatubonensis (strain JMP 134 / LMG 1197) (Cupriavidus necator (strain JMP 134)).